Here is a 281-residue protein sequence, read N- to C-terminus: Pantothenate synthetase (281 aa).

30 to 37 lines the ATP pocket; that stretch reads MGNLHQGH. Residue His-37 is the Proton donor of the active site. Gln-61 is a binding site for (R)-pantoate. Residue Gln-61 coordinates beta-alanine. 148-151 lines the ATP pocket; the sequence is GQKD. Residue Gln-154 coordinates (R)-pantoate. ATP contacts are provided by residues Ala-177 and 185–188; that span reads LSSR.

It belongs to the pantothenate synthetase family. In terms of assembly, homodimer.

The protein localises to the cytoplasm. The enzyme catalyses (R)-pantoate + beta-alanine + ATP = (R)-pantothenate + AMP + diphosphate + H(+). It functions in the pathway cofactor biosynthesis; (R)-pantothenate biosynthesis; (R)-pantothenate from (R)-pantoate and beta-alanine: step 1/1. Catalyzes the condensation of pantoate with beta-alanine in an ATP-dependent reaction via a pantoyl-adenylate intermediate. The chain is Pantothenate synthetase from Acinetobacter baylyi (strain ATCC 33305 / BD413 / ADP1).